A 998-amino-acid chain; its full sequence is SEC23-interacting protein (998 aa).

The tract at residues 1–363 (MADRKANGGG…YTEEFSEKLE (363 aa)) is interaction with SEC23A. Residues 50–246 (LPGEDSTDVG…AQQQVPARPA (197 aa)) are disordered. Over residues 54-63 (DSTDVGEEDS) the composition is skewed to acidic residues. The span at 65-78 (LGQTSTHTSTPQTF) shows a compositional bias: polar residues. Over residues 79–88 (SYFSQVSSSS) the composition is skewed to low complexity. Polar residues-rich tracts occupy residues 94 to 108 (IGQS…SAGQ), 143 to 158 (PPSQ…SQPS), and 232 to 241 (AMQSPAQQQV). Phosphoserine is present on serine 600. The SAM domain occupies 640–703 (EEPLTLHGTL…NFVKLKAAKL (64 aa)). The tract at residues 720–742 (TKGQDESAPKTKEMASPSSESNE) is disordered. The segment covering 722–732 (GQDESAPKTKE) has biased composition (basic and acidic residues). 3 positions are modified to phosphoserine: serine 735, serine 748, and serine 924. The region spanning 777 to 987 (LDFEPEIFFA…ALLLLKEIYR (211 aa)) is the DDHD domain.

It belongs to the PA-PLA1 family. Interacts with SEC23A.

It is found in the cytoplasmic vesicle. Its subcellular location is the COPII-coated vesicle membrane. The protein localises to the endoplasmic reticulum. Plays a role in the organization of endoplasmic reticulum exit sites. Specifically binds to phosphatidylinositol 3-phosphate (PI(3)P), phosphatidylinositol 4-phosphate (PI(4)P) and phosphatidylinositol 5-phosphate (PI(5)P). The protein is SEC23-interacting protein (Sec23ip) of Mus musculus (Mouse).